The primary structure comprises 295 residues: Cytidine deaminase (295 aa).

2 CMP/dCMP-type deaminase domains span residues 48-168 and 187-295; these read TDSE…FGPA and KETD…YVAA. 89–91 is a binding site for substrate; that stretch reads NME. H102 contributes to the Zn(2+) binding site. The Proton donor role is filled by E104. Residues C129 and C132 each coordinate Zn(2+).

The protein belongs to the cytidine and deoxycytidylate deaminase family. As to quaternary structure, homodimer. It depends on Zn(2+) as a cofactor.

It catalyses the reaction cytidine + H2O + H(+) = uridine + NH4(+). It carries out the reaction 2'-deoxycytidine + H2O + H(+) = 2'-deoxyuridine + NH4(+). In terms of biological role, this enzyme scavenges exogenous and endogenous cytidine and 2'-deoxycytidine for UMP synthesis. The chain is Cytidine deaminase from Photobacterium profundum (strain SS9).